The primary structure comprises 884 residues: Alanine--tRNA ligase (884 aa).

Positions 572, 576, 673, and 677 each coordinate Zn(2+).

Belongs to the class-II aminoacyl-tRNA synthetase family. It depends on Zn(2+) as a cofactor.

It localises to the cytoplasm. The enzyme catalyses tRNA(Ala) + L-alanine + ATP = L-alanyl-tRNA(Ala) + AMP + diphosphate. Catalyzes the attachment of alanine to tRNA(Ala) in a two-step reaction: alanine is first activated by ATP to form Ala-AMP and then transferred to the acceptor end of tRNA(Ala). Also edits incorrectly charged Ser-tRNA(Ala) and Gly-tRNA(Ala) via its editing domain. In Xylella fastidiosa (strain M12), this protein is Alanine--tRNA ligase.